We begin with the raw amino-acid sequence, 880 residues long: Translation initiation factor IF-2 (880 aa).

Over residues Glu-143 to Ile-228 the composition is skewed to basic and acidic residues. The interval Glu-143–Asn-289 is disordered. Residues Gly-249–Gly-262 show a composition bias toward basic residues. A tr-type G domain is found at Ser-380–Lys-549. The interval Gly-389 to Thr-396 is G1. Position 389–396 (Gly-389–Thr-396) interacts with GTP. Positions Gly-414–His-418 are G2. Residues Asp-435–Gly-438 form a G3 region. Residues Asp-435 to His-439 and Asn-489 to Asp-492 contribute to the GTP site. A G4 region spans residues Asn-489–Asp-492. The G5 stretch occupies residues Ser-525–Lys-527.

This sequence belongs to the TRAFAC class translation factor GTPase superfamily. Classic translation factor GTPase family. IF-2 subfamily.

The protein resides in the cytoplasm. One of the essential components for the initiation of protein synthesis. Protects formylmethionyl-tRNA from spontaneous hydrolysis and promotes its binding to the 30S ribosomal subunits. Also involved in the hydrolysis of GTP during the formation of the 70S ribosomal complex. The protein is Translation initiation factor IF-2 of Shewanella putrefaciens (strain CN-32 / ATCC BAA-453).